The following is a 513-amino-acid chain: ATP synthase subunit alpha (513 aa).

Residue 169–176 (GDRQTGKT) coordinates ATP.

The protein belongs to the ATPase alpha/beta chains family. As to quaternary structure, F-type ATPases have 2 components, CF(1) - the catalytic core - and CF(0) - the membrane proton channel. CF(1) has five subunits: alpha(3), beta(3), gamma(1), delta(1), epsilon(1). CF(0) has three main subunits: a(1), b(2) and c(9-12). The alpha and beta chains form an alternating ring which encloses part of the gamma chain. CF(1) is attached to CF(0) by a central stalk formed by the gamma and epsilon chains, while a peripheral stalk is formed by the delta and b chains.

The protein localises to the cell inner membrane. It catalyses the reaction ATP + H2O + 4 H(+)(in) = ADP + phosphate + 5 H(+)(out). Functionally, produces ATP from ADP in the presence of a proton gradient across the membrane. The alpha chain is a regulatory subunit. The sequence is that of ATP synthase subunit alpha from Halorhodospira halophila (strain DSM 244 / SL1) (Ectothiorhodospira halophila (strain DSM 244 / SL1)).